A 295-amino-acid chain; its full sequence is uncharacterized protein (295 aa).

Residues 2–226 (LSIESLCKSY…QQTNVFTLSV (225 aa)) enclose the ABC transporter domain. An ATP-binding site is contributed by 34-41 (GPNGAGKT).

This sequence belongs to the ABC transporter superfamily.

This is an uncharacterized protein from Bacillus subtilis (strain 168).